Reading from the N-terminus, the 130-residue chain is Interferon alpha-inducible protein 27-like protein 2 (130 aa).

3 helical membrane-spanning segments follow: residues 8–28 (AAVG…AMGF), 43–63 (MSAA…VATL), and 66–86 (VGAA…GSVL). Residues 93 to 130 (SPSSSLPAEPEAKEDEARENVPQGEPPKPPLKSEKHEE) are disordered.

It belongs to the IFI6/IFI27 family.

It is found in the mitochondrion membrane. Its function is as follows. Plays a role in the apoptotic process and has a pro-apoptotic activity. The protein is Interferon alpha-inducible protein 27-like protein 2 of Homo sapiens (Human).